A 309-amino-acid polypeptide reads, in one-letter code: Tagatose-6-phosphate kinase (309 aa).

It belongs to the carbohydrate kinase PfkB family. LacC subfamily.

It carries out the reaction D-tagatofuranose 6-phosphate + ATP = D-tagatofuranose 1,6-bisphosphate + ADP + H(+). Its pathway is carbohydrate metabolism; D-tagatose 6-phosphate degradation; D-glyceraldehyde 3-phosphate and glycerone phosphate from D-tagatose 6-phosphate: step 1/2. This is Tagatose-6-phosphate kinase from Streptococcus pyogenes serotype M18 (strain MGAS8232).